The chain runs to 381 residues: uncharacterized protein (381 aa).

2 disordered regions span residues 1 to 20 (MPYY…FDPT) and 36 to 381 (IPPS…EDDE). Positions 9 to 18 (NDVDDFDEFD) are enriched in acidic residues. 2 stretches are compositionally biased toward basic and acidic residues: residues 166–175 (TEVEYGRRPE) and 186–237 (SESE…EGYR). Phosphoserine is present on residues Ser339, Ser346, and Ser357. The segment covering 364–374 (KKHRHKHHHQK) has biased composition (basic residues).

This is an uncharacterized protein from Arabidopsis thaliana (Mouse-ear cress).